Reading from the N-terminus, the 747-residue chain is NAD(P)H-quinone oxidoreductase subunit 5, chloroplastic (747 aa).

16 consecutive transmembrane segments (helical) span residues 9-29 (WIIPFTPLPVPILIGVGLLLF), 40-60 (WAFPSIFLLIIVMIFSVDLSI), 89-109 (IDSLTSIMSILITTVGILVLI), 125-145 (FAYLSFFNTSMLGLVTSSNLI), 147-167 (VYIFWELVGMCSYLLIGFWFT), 185-205 (GDFGLLLGILGLYWITGSLEF), 219-239 (NEVNIFFITLCALLLFCGSVA), 258-278 (TPISALIHAATMVAAGIFLVA), 280-300 (LLPFFIAIPSIMNGIAFIGII), 327-347 (LGYMMLALGMGSYRIALFHLI), 354-374 (ALLFLGSGSIIHSMEAIVGYS), 396-416 (TAFLIGTLSLCGIPPFACFWS), 425-445 (WLYSPIFAIIACSTAGLTAFY), 552-572 (LFSMLVLVLFTFFVGAIGISF), 606-626 (FFTNATFSVSIAFFGIFIASF), and 727-747 (YILFFVFFVLLFLIIFYSFFI).

It belongs to the complex I subunit 5 family. As to quaternary structure, NDH is composed of at least 16 different subunits, 5 of which are encoded in the nucleus.

It is found in the plastid. It localises to the chloroplast thylakoid membrane. It catalyses the reaction a plastoquinone + NADH + (n+1) H(+)(in) = a plastoquinol + NAD(+) + n H(+)(out). The catalysed reaction is a plastoquinone + NADPH + (n+1) H(+)(in) = a plastoquinol + NADP(+) + n H(+)(out). NDH shuttles electrons from NAD(P)H:plastoquinone, via FMN and iron-sulfur (Fe-S) centers, to quinones in the photosynthetic chain and possibly in a chloroplast respiratory chain. The immediate electron acceptor for the enzyme in this species is believed to be plastoquinone. Couples the redox reaction to proton translocation, and thus conserves the redox energy in a proton gradient. The chain is NAD(P)H-quinone oxidoreductase subunit 5, chloroplastic (ndhF) from Lotus japonicus (Lotus corniculatus var. japonicus).